The chain runs to 237 residues: Uridylate kinase (237 aa).

Position 9–12 (9–12) interacts with ATP; that stretch reads KLSG. Positions 17–22 are involved in allosteric activation by GTP; sequence GSQGYG. Glycine 51 lines the UMP pocket. ATP is bound by residues glycine 52 and arginine 56. UMP-binding positions include aspartate 71 and 132-139; that span reads CGNPFFTT. ATP-binding residues include threonine 159, tyrosine 165, and aspartate 168.

This sequence belongs to the UMP kinase family. In terms of assembly, homohexamer.

The protein localises to the cytoplasm. The catalysed reaction is UMP + ATP = UDP + ADP. The protein operates within pyrimidine metabolism; CTP biosynthesis via de novo pathway; UDP from UMP (UMPK route): step 1/1. Allosterically activated by GTP. Inhibited by UTP. Catalyzes the reversible phosphorylation of UMP to UDP. In Synechococcus sp. (strain CC9605), this protein is Uridylate kinase.